The sequence spans 153 residues: Ubiquitin-conjugating enzyme E2 13 (153 aa).

A UBC core domain is found at S3–K149. C87 functions as the Glycyl thioester intermediate in the catalytic mechanism. A Glycyl lysine isopeptide (Lys-Gly) (interchain with G-Cter in ubiquitin) cross-link involves residue K92.

It belongs to the ubiquitin-conjugating enzyme family. Heterodimer with MMS2.

It catalyses the reaction S-ubiquitinyl-[E1 ubiquitin-activating enzyme]-L-cysteine + [E2 ubiquitin-conjugating enzyme]-L-cysteine = [E1 ubiquitin-activating enzyme]-L-cysteine + S-ubiquitinyl-[E2 ubiquitin-conjugating enzyme]-L-cysteine.. The protein operates within protein modification; protein ubiquitination. Functionally, has a role in the DNA error-free postreplication repair (PRR) pathway. The UBC13/MMS2 heterodimer catalyzes the synthesis of non-canonical poly-ubiquitin chains that are linked through 'Lys-63'. This Saccharomyces cerevisiae (strain ATCC 204508 / S288c) (Baker's yeast) protein is Ubiquitin-conjugating enzyme E2 13 (UBC13).